The following is a 173-amino-acid chain: Crossover junction endodeoxyribonuclease RuvC (173 aa).

Active-site residues include Asp-8, Glu-67, and Asp-139. Residues Asp-8, Glu-67, and Asp-139 each contribute to the Mg(2+) site.

Belongs to the RuvC family. In terms of assembly, homodimer which binds Holliday junction (HJ) DNA. The HJ becomes 2-fold symmetrical on binding to RuvC with unstacked arms; it has a different conformation from HJ DNA in complex with RuvA. In the full resolvosome a probable DNA-RuvA(4)-RuvB(12)-RuvC(2) complex forms which resolves the HJ. It depends on Mg(2+) as a cofactor.

The protein resides in the cytoplasm. The catalysed reaction is Endonucleolytic cleavage at a junction such as a reciprocal single-stranded crossover between two homologous DNA duplexes (Holliday junction).. Its function is as follows. The RuvA-RuvB-RuvC complex processes Holliday junction (HJ) DNA during genetic recombination and DNA repair. Endonuclease that resolves HJ intermediates. Cleaves cruciform DNA by making single-stranded nicks across the HJ at symmetrical positions within the homologous arms, yielding a 5'-phosphate and a 3'-hydroxyl group; requires a central core of homology in the junction. The consensus cleavage sequence is 5'-(A/T)TT(C/G)-3'. Cleavage occurs on the 3'-side of the TT dinucleotide at the point of strand exchange. HJ branch migration catalyzed by RuvA-RuvB allows RuvC to scan DNA until it finds its consensus sequence, where it cleaves and resolves the cruciform DNA. This chain is Crossover junction endodeoxyribonuclease RuvC, found in Aeromonas hydrophila subsp. hydrophila (strain ATCC 7966 / DSM 30187 / BCRC 13018 / CCUG 14551 / JCM 1027 / KCTC 2358 / NCIMB 9240 / NCTC 8049).